The primary structure comprises 177 residues: Adenine phosphoribosyltransferase (177 aa).

It belongs to the purine/pyrimidine phosphoribosyltransferase family. Homodimer.

It is found in the cytoplasm. It carries out the reaction AMP + diphosphate = 5-phospho-alpha-D-ribose 1-diphosphate + adenine. It participates in purine metabolism; AMP biosynthesis via salvage pathway; AMP from adenine: step 1/1. Catalyzes a salvage reaction resulting in the formation of AMP, that is energically less costly than de novo synthesis. The protein is Adenine phosphoribosyltransferase of Idiomarina loihiensis (strain ATCC BAA-735 / DSM 15497 / L2-TR).